Reading from the N-terminus, the 440-residue chain is MEELARESISLLGKSGLEGGTPSLSSMGAIFIMLKSALGAGLLNFPWAFNKVGGMHTAIMVELVSLIFLISGLVILGYASSLSKHSTYQGVVKDLCGPAIGKLCGICYIINLFMICVAFLRVVEDQLEKLCDSIHSNNTLYAMSEVSQSWYMDPRFAITVLCLVIILPLSIPKEISFQKYTSILGTLAACYLTVMIIIKYYVMEHPVLIKHEFSSNAASWASMFSVVPTICFGFQCHEACVTIYSSMKNKCLSNWAAVSVVSMLICLLIYSFTGIYGSLTFGEAVAADILMSYPGNDVAVIIARLLFTISIITIYPIILLLGRCVIQEAWLNHREKSLFVTLTYERCVRVVITVLWILVTLLIALFVPDISEVISVIGGISAFFIFIFPGLCLVCAVESEPMNTKAKSCLTAWGAISVVCGAFVFGQSTTIAVMEIIAKF.

11 helical membrane passes run 29 to 49 (AIFI…PWAF), 58 to 78 (AIMV…ILGY), 100 to 120 (IGKL…VAFL), 156 to 176 (FAIT…KEIS), 183 to 203 (ILGT…YYVM), 223 to 243 (MFSV…CVTI), 255 to 275 (WAAV…FTGI), 300 to 320 (VIIA…IILL), 350 to 370 (VVIT…VPDI), 373 to 393 (VISV…GLCL), and 418 to 438 (VVCG…EIIA).

The protein belongs to the amino acid/polyamine transporter 2 family.

The protein localises to the membrane. Functionally, putative sodium-dependent amino acid/proton antiporter. The protein is Putative sodium-coupled neutral amino acid transporter 8 (slc38a8) of Xenopus tropicalis (Western clawed frog).